The sequence spans 211 residues: Holliday junction branch migration complex subunit RuvA (211 aa).

The domain I stretch occupies residues 1-70 (MIQFLQGQVV…QDQIALFGFG (70 aa)). Positions 71–149 (RLAERDLFGQ…QWHKLQMGTG (79 aa)) are domain II. A flexible linker region spans residues 150 to 158 (ETDSTLPTT). Positions 158 to 211 (TALLEDLEMTLLALGYTQTEIQQAIAMVSQVPDVAQSEDPEVWIRQAIGWLSDH) are domain III.

It belongs to the RuvA family. Homotetramer. Forms an RuvA(8)-RuvB(12)-Holliday junction (HJ) complex. HJ DNA is sandwiched between 2 RuvA tetramers; dsDNA enters through RuvA and exits via RuvB. An RuvB hexamer assembles on each DNA strand where it exits the tetramer. Each RuvB hexamer is contacted by two RuvA subunits (via domain III) on 2 adjacent RuvB subunits; this complex drives branch migration. In the full resolvosome a probable DNA-RuvA(4)-RuvB(12)-RuvC(2) complex forms which resolves the HJ.

Its subcellular location is the cytoplasm. Its function is as follows. The RuvA-RuvB-RuvC complex processes Holliday junction (HJ) DNA during genetic recombination and DNA repair, while the RuvA-RuvB complex plays an important role in the rescue of blocked DNA replication forks via replication fork reversal (RFR). RuvA specifically binds to HJ cruciform DNA, conferring on it an open structure. The RuvB hexamer acts as an ATP-dependent pump, pulling dsDNA into and through the RuvAB complex. HJ branch migration allows RuvC to scan DNA until it finds its consensus sequence, where it cleaves and resolves the cruciform DNA. This Synechocystis sp. (strain ATCC 27184 / PCC 6803 / Kazusa) protein is Holliday junction branch migration complex subunit RuvA.